Here is a 753-residue protein sequence, read N- to C-terminus: Eukaryotic translation initiation factor 3 subunit B (753 aa).

The 88-residue stretch at 42–129 (TMLVVDNIPI…NVLHVNRFGD (88 aa)) folds into the RRM domain. WD repeat units lie at residues 142-185 (DLPS…WWNG), 203-241 (NSKWGELYLQWSTMGTYLASLHRVGVALWSGPKLDGPIG), 321-362 (DTQS…LLDR), 537-580 (LDSK…DERR), and 595-640 (GEHY…LLHE). Residues 723–753 (KSKAKIDVKGQEARVEEWVEELIDETEELSM) adopt a coiled-coil conformation.

The protein belongs to the eIF-3 subunit B family. Component of the eukaryotic translation initiation factor 3 (eIF-3) complex.

Its subcellular location is the cytoplasm. Functionally, RNA-binding component of the eukaryotic translation initiation factor 3 (eIF-3) complex, which is involved in protein synthesis of a specialized repertoire of mRNAs and, together with other initiation factors, stimulates binding of mRNA and methionyl-tRNAi to the 40S ribosome. The eIF-3 complex specifically targets and initiates translation of a subset of mRNAs involved in cell proliferation. This Cryptococcus neoformans var. neoformans serotype D (strain B-3501A) (Filobasidiella neoformans) protein is Eukaryotic translation initiation factor 3 subunit B.